We begin with the raw amino-acid sequence, 101 residues long: Putative pterin-4-alpha-carbinolamine dehydratase (101 aa).

This sequence belongs to the pterin-4-alpha-carbinolamine dehydratase family.

It catalyses the reaction (4aS,6R)-4a-hydroxy-L-erythro-5,6,7,8-tetrahydrobiopterin = (6R)-L-erythro-6,7-dihydrobiopterin + H2O. This is Putative pterin-4-alpha-carbinolamine dehydratase from Rhodopseudomonas palustris (strain HaA2).